The chain runs to 698 residues: Dual trans-enoyl reductase/FAD-dependent monooxygenase tazHJ (698 aa).

Residues 54–57 (STAT), 78–81 (SPRH), Tyr96, and 279–280 (IA) each bind NADP(+). The FAD site is built by Glu299, Gly312, and Arg372. The active site involves Arg455. The FAD site is built by Asp571 and Ala584.

This sequence in the N-terminal section; belongs to the zinc-containing alcohol dehydrogenase family. The protein in the C-terminal section; belongs to the paxM FAD-dependent monooxygenase family.

Its pathway is secondary metabolite biosynthesis. Functionally, dual trans-enoyl reductase/FAD-dependent monooxygenase; part of the gene cluster that mediates the biosynthesis of azaterrilone A and other azaphilones, a class of fungal metabolites characterized by a highly oxygenated pyrano-quinone bicyclic core and exhibiting a broad range of bioactivities. The first step of the pathway begins with the non-reducing polyketide synthase tazA that assembles one acetyl-CoA starter unit, five malonyl-CoA units, and catalyzes a series of Claisen condensations, methylation, PT-mediated cyclization, and finally releases the first hexaketide precursor through the R-domain. The tazA product then undergoes reduction on its terminal ketone and the following pyran-ring formation by yet undetermined enzyme(s). Dehydration and enoyl reduction, possibly involving the trans-enoyl reductase tazE leads to the next intermediate. TazD is predicted as an acetyltransferase and might catalyze the acetylation steps leading to the synthesis of azaterrilone A. Azaterrilone A is not the final product of the taz pathway and both the highly reducing polyketide synthase tazB and the dual enzyme tazHJ catalyze late steps of the pathway, leading to the production of the 2 final stereoisomers that contain additional polyketide modification whose structures have still to be determined. The chain is Dual trans-enoyl reductase/FAD-dependent monooxygenase tazHJ from Aspergillus terreus (strain NIH 2624 / FGSC A1156).